Reading from the N-terminus, the 866-residue chain is DNA mismatch repair protein MutS (866 aa).

Residue 613–620 (GPNMGGKS) coordinates ATP.

It belongs to the DNA mismatch repair MutS family.

Its function is as follows. This protein is involved in the repair of mismatches in DNA. It is possible that it carries out the mismatch recognition step. This protein has a weak ATPase activity. The polypeptide is DNA mismatch repair protein MutS (Haemophilus ducreyi (strain 35000HP / ATCC 700724)).